The sequence spans 555 residues: Glucose-6-phosphate isomerase (555 aa).

The Proton donor role is filled by Glu-353. Active-site residues include His-384 and Lys-516.

This sequence belongs to the GPI family.

It is found in the cytoplasm. It catalyses the reaction alpha-D-glucose 6-phosphate = beta-D-fructose 6-phosphate. It participates in carbohydrate biosynthesis; gluconeogenesis. It functions in the pathway carbohydrate degradation; glycolysis; D-glyceraldehyde 3-phosphate and glycerone phosphate from D-glucose: step 2/4. Functionally, catalyzes the reversible isomerization of glucose-6-phosphate to fructose-6-phosphate. In Methylobacillus flagellatus (strain ATCC 51484 / DSM 6875 / VKM B-1610 / KT), this protein is Glucose-6-phosphate isomerase.